The following is a 262-amino-acid chain: Indole-3-glycerol phosphate synthase (262 aa).

Belongs to the TrpC family.

It carries out the reaction 1-(2-carboxyphenylamino)-1-deoxy-D-ribulose 5-phosphate + H(+) = (1S,2R)-1-C-(indol-3-yl)glycerol 3-phosphate + CO2 + H2O. It participates in amino-acid biosynthesis; L-tryptophan biosynthesis; L-tryptophan from chorismate: step 4/5. In Leuconostoc mesenteroides subsp. mesenteroides (strain ATCC 8293 / DSM 20343 / BCRC 11652 / CCM 1803 / JCM 6124 / NCDO 523 / NBRC 100496 / NCIMB 8023 / NCTC 12954 / NRRL B-1118 / 37Y), this protein is Indole-3-glycerol phosphate synthase.